Here is a 494-residue protein sequence, read N- to C-terminus: Leucine-rich repeat extensin-like protein 4 (494 aa).

An N-terminal signal peptide occupies residues 1 to 25 (MKNNTTQSLLLLLLFFFFFFEISHS). Residues Asn-60, Asn-94, and Asn-106 are each glycosylated (N-linked (GlcNAc...) asparagine). 9 LRR repeats span residues 121 to 145 (IRTVAGIDLNHADIAGYLPEELGLL), 146 to 168 (TDLALFHVNSNRFCGTVPHKFKQ), 169 to 193 (LKLLFELDLSNNRFAGKFPTVVLHL), 194 to 217 (PSLKFLDLRFNEFEGTVPKELFSK), 219 to 240 (LDAIFINHNRFRFELPENFGDS), 242 to 263 (VSVIVLANNHFHGCIPTSLVEM), 264 to 287 (KNLNEIIFMNNGLNSCLPADIGRL), 289 to 311 (NVTVFDVSFNELVGPLPESVGGM), and 312 to 335 (VEVEQLNVAHNLLSGKIPASICQL). Asn-289 is a glycosylation site (N-linked (GlcNAc...) asparagine). Asn-340 carries an N-linked (GlcNAc...) asparagine glycan. Residues 404–494 (SPPIVALPPP…YASPPPPPFY (91 aa)) form a contains the Ser-Pro(4) repeats region. A compositionally biased stretch (pro residues) spans 422–479 (PPVYSPPPSPPVFSPPPSPPVYSPPPPPSIHYSSPPPPPVHHSSPPPPSPEFEGPLPP). Positions 422 to 482 (PPVYSPPPSP…FEGPLPPVIG (61 aa)) are disordered.

In terms of processing, hydroxylated on proline residues in the S-P-P-P-P repeat. O-glycosylated on hydroxyprolines. As to expression, expressed in roots, stems, leaves and flowers, mostly in vascular tissues.

The protein localises to the secreted. It localises to the cell wall. Its function is as follows. Modulates cell morphogenesis by regulating cell wall formation and assembly, and/or growth polarization. The chain is Leucine-rich repeat extensin-like protein 4 (LRX4) from Arabidopsis thaliana (Mouse-ear cress).